Consider the following 286-residue polypeptide: Formamidopyrimidine-DNA glycosylase (286 aa).

Residue Pro-2 is the Schiff-base intermediate with DNA of the active site. Glu-3 acts as the Proton donor in catalysis. Residue Lys-61 is the Proton donor; for beta-elimination activity of the active site. DNA is bound by residues His-96, Arg-115, and Lys-161. The segment at 247–281 adopts an FPG-type zinc-finger fold; the sequence is EAYGREGEPCRRCGRAMRREAFMNRSSYFCPSCQR. Arg-271 functions as the Proton donor; for delta-elimination activity in the catalytic mechanism.

The protein belongs to the FPG family. Monomer. Zn(2+) is required as a cofactor.

It catalyses the reaction Hydrolysis of DNA containing ring-opened 7-methylguanine residues, releasing 2,6-diamino-4-hydroxy-5-(N-methyl)formamidopyrimidine.. It carries out the reaction 2'-deoxyribonucleotide-(2'-deoxyribose 5'-phosphate)-2'-deoxyribonucleotide-DNA = a 3'-end 2'-deoxyribonucleotide-(2,3-dehydro-2,3-deoxyribose 5'-phosphate)-DNA + a 5'-end 5'-phospho-2'-deoxyribonucleoside-DNA + H(+). In terms of biological role, involved in base excision repair of DNA damaged by oxidation or by mutagenic agents. Acts as a DNA glycosylase that recognizes and removes damaged bases. Has a preference for oxidized purines, such as 7,8-dihydro-8-oxoguanine (8-oxoG). Has AP (apurinic/apyrimidinic) lyase activity and introduces nicks in the DNA strand. Cleaves the DNA backbone by beta-delta elimination to generate a single-strand break at the site of the removed base with both 3'- and 5'-phosphates. In Mycobacteroides abscessus (strain ATCC 19977 / DSM 44196 / CCUG 20993 / CIP 104536 / JCM 13569 / NCTC 13031 / TMC 1543 / L948) (Mycobacterium abscessus), this protein is Formamidopyrimidine-DNA glycosylase.